We begin with the raw amino-acid sequence, 394 residues long: Actin-related protein 2 (394 aa).

Met-1 carries the N-acetylmethionine modification. ATP-binding positions include 160 to 162 and 214 to 218; these read GDG and RMIKE. The residue at position 299 (Lys-299) is an N6-acetyllysine. Position 305–310 (305–310) interacts with ATP; the sequence is GGSTMY. At Lys-322 the chain carries N6-acetyllysine.

It belongs to the actin family. ARP2 subfamily. In terms of assembly, component of the Arp2/3 complex composed of ACTR2/ARP2, ACTR3/ARP3, ARPC1B/p41-ARC, ARPC2/p34-ARC, ARPC3/p21-ARC, ARPC4/p20-ARC and ARPC5/p16-ARC. Interacts with AVIL.

The protein resides in the cytoplasm. It is found in the cytoskeleton. Its subcellular location is the cell projection. The protein localises to the nucleus. ATP-binding component of the Arp2/3 complex, a multiprotein complex that mediates actin polymerization upon stimulation by nucleation-promoting factor (NPF). The Arp2/3 complex mediates the formation of branched actin networks in the cytoplasm, providing the force for cell motility. Seems to contact the pointed end of the daughter actin filament. In podocytes, required for the formation of lamellipodia downstream of AVIL and PLCE1 regulation. In addition to its role in the cytoplasmic cytoskeleton, the Arp2/3 complex also promotes actin polymerization in the nucleus, thereby regulating gene transcription and repair of damaged DNA. The Arp2/3 complex promotes homologous recombination (HR) repair in response to DNA damage by promoting nuclear actin polymerization, leading to drive motility of double-strand breaks (DSBs). This Pongo abelii (Sumatran orangutan) protein is Actin-related protein 2 (ACTR2).